The primary structure comprises 755 residues: Ribosome biogenesis protein BOP1 (755 aa).

Polar residues-rich tracts occupy residues 1–10 (MSQEPSSSFS) and 43–61 (ELSSSSDNGDQGQPLTEPN). The disordered stretch occupies residues 1–65 (MSQEPSSSFS…PLTEPNNIPI (65 aa)). The tract at residues 309–754 (MDSMLPTLPN…SGTDGVLRLF (446 aa)) is interaction with EB1. The WD 1 repeat unit spans residues 335 to 374 (TGTRRINGLTFSPKGMFFAVGGRDCILRVFETYSGRQVRA). The tract at residues 482 to 505 (YNEGSEDDDAAESARFNEERHQRG) is disordered. Residues 496-505 (RFNEERHQRG) are compositionally biased toward basic and acidic residues. WD repeat units lie at residues 617-655 (PGVKQVTASGMGYGDNFITGSADSQCALFANAAGPEPTA), 659-698 (YHTSTIRNIDVHPCGGLVATCSDDGIVQISRIVDASLVKM), and 725-755 (DGSVGISRVTWHPRQPWLLCSGTDGVLRLFK).

The protein belongs to the WD repeat BOP1/ERB1 family. In terms of assembly, interacts (via C-terminal WD repeats) with giardin subunit beta. Interacts (via C-terminal WD repeats) with EB1.

The protein resides in the nucleus. It is found in the nucleolus. Its subcellular location is the nucleus membrane. Its function is as follows. Required for maturation of ribosomal RNAs and formation of the large ribosomal subunit. The polypeptide is Ribosome biogenesis protein BOP1 (Giardia intestinalis (Giardia lamblia)).